The sequence spans 442 residues: D-serine dehydratase (442 aa).

Lys118 carries the N6-(pyridoxal phosphate)lysine modification.

Belongs to the serine/threonine dehydratase family. DsdA subfamily. As to quaternary structure, monomer. It depends on pyridoxal 5'-phosphate as a cofactor.

It catalyses the reaction D-serine = pyruvate + NH4(+). The protein is D-serine dehydratase of Escherichia coli (strain 55989 / EAEC).